A 663-amino-acid polypeptide reads, in one-letter code: MKTHSVFGFFFKVLLIQVYLFNKTLAAPSPIIKFPGDSTPKTDKELAVQYLNKYYGCPKDNCNLFVLKDTLKKMQKFFGLPETGDLDQNTIETMKKPRCGNPDVANYNFFPRKPKWEKNHITYRIIGYTPDLDPETVDDAFARAFKVWSDVTPLRFNRINDGEADIMINFGRWEHGDGYPFDGKDGLLAHAFAPGPGIGGDSHFDDDELWTLGEGQVVRVKYGNADGEYCKFPFWFNGKEYNSCTDAGRNDGFLWCSTTKDFDADGKYGFCPHESLFTMGGNGDGQPCKFPFKFQGQSYDQCTTEGRTDGYRWCGTTEDYDRDKKYGFCPETAMSTVGGNSEGAPCVFPFIFLGNKYDSCTSAGRNDGKLWCASTSSYDDDRKWGFCPDQGYSLFLVAAHEFGHAMGLEHSEDPGALMAPIYTYTKNFRLSQDDIKGIQELYEVSPDVEPGPGPGPGPGPRPTLGPVTPELCKHDIVFDGVAQIRGEIFFFKDRFMWRTVNPRGKPTGPLLVATFWPDLPEKIDAVYESPQDEKAVFFAGNEYWVYTASNLDRGYPKKLTSLGLPPDVQRIDAAFNWGRNKKTYIFSGDRYWKYNEEKKKMELATPKFIADSWNGVPDNLDAVLGLTDSGYTYFFKDQYYLQMEDKSLKIVKIGKISSDWLGC.

Residues Met-1–Ala-26 form the signal peptide. Residues Ala-27–Asn-106 constitute a propeptide, activation peptide. The Cysteine switch motif lies at Pro-97 to Val-104. Cys-99 is a binding site for Zn(2+). The segment at Tyr-107 to Val-218 is collagenase-like 1. 2 residues coordinate Ca(2+): Asp-131 and Asp-165. Residues His-175 and Asp-177 each contribute to the Zn(2+) site. The Ca(2+) site is built by Asp-182 and Gly-183. Position 190 (His-190) interacts with Zn(2+). The Ca(2+) site is built by Gly-197, Gly-199, and Asp-201. Zn(2+) is bound at residue His-203. Positions 205, 206, and 208 each coordinate Ca(2+). The interval Arg-219–Ser-393 is collagen-binding. 3 consecutive Fibronectin type-II domains span residues Ala-225–His-273, Gly-283–Glu-331, and Ser-341–Asp-389. 6 disulfide bridges follow: Cys-230-Cys-256, Cys-244-Cys-271, Cys-288-Cys-314, Cys-302-Cys-329, Cys-346-Cys-372, and Cys-360-Cys-387. The interval Leu-394 to Thr-468 is collagenase-like 2. His-400 serves as a coordination point for Zn(2+). Glu-401 is an active-site residue. Residues His-404 and His-410 each contribute to the Zn(2+) site. Residues Ser-445 to Leu-464 are disordered. The segment covering Glu-449 to Thr-463 has biased composition (pro residues). Cys-472 and Cys-663 are joined by a disulfide. Hemopexin repeat units follow at residues Asp-475–Leu-519, Pro-520–Pro-566, Val-568–Val-616, and Pro-617–Cys-663. Asp-479, Asp-524, Asp-572, and Asp-621 together coordinate Ca(2+).

Belongs to the peptidase M10A family. As to quaternary structure, ligand for integrin alpha-V/beta-3. Ca(2+) serves as cofactor. It depends on Zn(2+) as a cofactor. Post-translationally, the propeptide is processed by MMP14 (MT-MMP1) and MMP16 (MT-MMP3). In terms of tissue distribution, produced by normal skin fibroblasts.

The protein localises to the secreted. It is found in the extracellular space. Its subcellular location is the extracellular matrix. It carries out the reaction Cleavage of gelatin type I and collagen types IV, V, VII, X. Cleaves the collagen-like sequence Pro-Gln-Gly-|-Ile-Ala-Gly-Gln.. The protein is 72 kDa type IV collagenase (MMP2) of Gallus gallus (Chicken).